Here is a 357-residue protein sequence, read N- to C-terminus: UDP-N-acetylglucosamine--N-acetylmuramyl-(pentapeptide) pyrophosphoryl-undecaprenol N-acetylglucosamine transferase (357 aa).

UDP-N-acetyl-alpha-D-glucosamine-binding positions include 12–14 (TGG), asparagine 124, arginine 162, serine 190, isoleucine 244, 263–268 (ALTVAE), and glutamine 289.

This sequence belongs to the glycosyltransferase 28 family. MurG subfamily.

The protein resides in the cell inner membrane. The catalysed reaction is di-trans,octa-cis-undecaprenyl diphospho-N-acetyl-alpha-D-muramoyl-L-alanyl-D-glutamyl-meso-2,6-diaminopimeloyl-D-alanyl-D-alanine + UDP-N-acetyl-alpha-D-glucosamine = di-trans,octa-cis-undecaprenyl diphospho-[N-acetyl-alpha-D-glucosaminyl-(1-&gt;4)]-N-acetyl-alpha-D-muramoyl-L-alanyl-D-glutamyl-meso-2,6-diaminopimeloyl-D-alanyl-D-alanine + UDP + H(+). The protein operates within cell wall biogenesis; peptidoglycan biosynthesis. Functionally, cell wall formation. Catalyzes the transfer of a GlcNAc subunit on undecaprenyl-pyrophosphoryl-MurNAc-pentapeptide (lipid intermediate I) to form undecaprenyl-pyrophosphoryl-MurNAc-(pentapeptide)GlcNAc (lipid intermediate II). This chain is UDP-N-acetylglucosamine--N-acetylmuramyl-(pentapeptide) pyrophosphoryl-undecaprenol N-acetylglucosamine transferase, found in Alkalilimnicola ehrlichii (strain ATCC BAA-1101 / DSM 17681 / MLHE-1).